Here is a 266-residue protein sequence, read N- to C-terminus: Indole-3-glycerol phosphate synthase (266 aa).

The protein belongs to the TrpC family.

It carries out the reaction 1-(2-carboxyphenylamino)-1-deoxy-D-ribulose 5-phosphate + H(+) = (1S,2R)-1-C-(indol-3-yl)glycerol 3-phosphate + CO2 + H2O. It participates in amino-acid biosynthesis; L-tryptophan biosynthesis; L-tryptophan from chorismate: step 4/5. The protein is Indole-3-glycerol phosphate synthase of Herminiimonas arsenicoxydans.